The sequence spans 279 residues: MRYVRLCVISLLATLPLVVYAGPQPLEQIKQSESQLSGRVGMVEMDLANGRTLAAWRADERFPMVSTFKVLLCGAVLARVDAGLEQLDRRIHYRQQDLVDYSPVSEKHLVDGMTIGELCAAAITLSDNSAGNLLLATVGGPAGLTAFLRQIGDNVTRLDRWETALNEALPGDARDTTTPASMAATLRKLLTAQHLSARSQQQLLQWMVDDRVAGPLIRAVLPPGWFIADKTGAGERGARGIVALLGPDGKPERIVVIYLRDTPASMAERNQHIAGIGQR.

The first 21 residues, 1–21 (MRYVRLCVISLLATLPLVVYA), serve as a signal peptide directing secretion. The active-site Acyl-ester intermediate is the serine 66. Cysteine 73 and cysteine 119 are joined by a disulfide. A substrate-binding site is contributed by 230–232 (KTG).

The protein belongs to the class-A beta-lactamase family.

The catalysed reaction is a beta-lactam + H2O = a substituted beta-amino acid. In Klebsiella pneumoniae, this protein is Beta-lactamase.